A 402-amino-acid polypeptide reads, in one-letter code: Dual-specificity RNA methyltransferase RlmN (402 aa).

Glutamate 94 (proton acceptor) is an active-site residue. The Radical SAM core domain maps to 100 to 351 (EDDRGTLCIS…ATVRKTRGDD (252 aa)). A disulfide bridge links cysteine 107 with cysteine 356. [4Fe-4S] cluster contacts are provided by cysteine 114, cysteine 118, and cysteine 121. Residues 182–183 (GE), serine 214, 236–238 (SLH), and asparagine 313 contribute to the S-adenosyl-L-methionine site. Cysteine 356 serves as the catalytic S-methylcysteine intermediate.

This sequence belongs to the radical SAM superfamily. RlmN family. [4Fe-4S] cluster serves as cofactor.

It is found in the cytoplasm. The catalysed reaction is adenosine(2503) in 23S rRNA + 2 reduced [2Fe-2S]-[ferredoxin] + 2 S-adenosyl-L-methionine = 2-methyladenosine(2503) in 23S rRNA + 5'-deoxyadenosine + L-methionine + 2 oxidized [2Fe-2S]-[ferredoxin] + S-adenosyl-L-homocysteine. It carries out the reaction adenosine(37) in tRNA + 2 reduced [2Fe-2S]-[ferredoxin] + 2 S-adenosyl-L-methionine = 2-methyladenosine(37) in tRNA + 5'-deoxyadenosine + L-methionine + 2 oxidized [2Fe-2S]-[ferredoxin] + S-adenosyl-L-homocysteine. Functionally, specifically methylates position 2 of adenine 2503 in 23S rRNA and position 2 of adenine 37 in tRNAs. m2A2503 modification seems to play a crucial role in the proofreading step occurring at the peptidyl transferase center and thus would serve to optimize ribosomal fidelity. The protein is Dual-specificity RNA methyltransferase RlmN of Polynucleobacter asymbioticus (strain DSM 18221 / CIP 109841 / QLW-P1DMWA-1) (Polynucleobacter necessarius subsp. asymbioticus).